A 20-amino-acid chain; its full sequence is Unknown protein NF028 from 2D-PAGE (20 aa).

In Naegleria fowleri (Brain eating amoeba), this protein is Unknown protein NF028 from 2D-PAGE.